Here is a 451-residue protein sequence, read N- to C-terminus: MTRKLFGTDGIRGTANTDPMTAEMAMKLGMAAGRHFTRGDHRHVVVIGKDTRLSGYLLEPALTAGFISVGMDVVLLGPLPTPAVALLTRSMRADLGVMISASHNPYEDNGIKLFGPDGFKLSDEDELTIEASMSNGLESCRVGSDHLGRAKRLDDAAGRYIEYAKYTFPRGLRLDGLKIVVDCANGAAYKVAPTVLWELGAEVIPVAVNPDGFNINKNCGSLHTETMREQVVAHGAHLGIALDGDADRVVLCDELGHMIDGDQLMALIGDLWHRSGQLKGGGIVATVMSNLGLERFLDQRGLKTIRTAVGDRYVLEHMRRDGFNVGGEQSGHIILSDHSTTGDGLVAGLQVLAALVQSGKPASEMLRLFTPLPQVLKNVRVAKGSVAEVLAAPAVEAAIRDAEAKLAGQGRLLIRKSGTEPLIRVMAEGEDEGLVEASVDAIVETIRRAAG.

Ser-102 serves as the catalytic Phosphoserine intermediate. Residues Ser-102, Asp-243, Asp-245, and Asp-247 each coordinate Mg(2+). Ser-102 carries the phosphoserine modification.

Belongs to the phosphohexose mutase family. Mg(2+) is required as a cofactor. Activated by phosphorylation.

The catalysed reaction is alpha-D-glucosamine 1-phosphate = D-glucosamine 6-phosphate. Catalyzes the conversion of glucosamine-6-phosphate to glucosamine-1-phosphate. The protein is Phosphoglucosamine mutase of Paramagnetospirillum magneticum (strain ATCC 700264 / AMB-1) (Magnetospirillum magneticum).